The chain runs to 390 residues: L-seryl-tRNA(Sec) selenium transferase (390 aa).

At Lys-225 the chain carries N6-(pyridoxal phosphate)lysine.

Belongs to the SelA family. Requires pyridoxal 5'-phosphate as cofactor.

Its subcellular location is the cytoplasm. The catalysed reaction is L-seryl-tRNA(Sec) + selenophosphate + H(+) = L-selenocysteinyl-tRNA(Sec) + phosphate. It participates in aminoacyl-tRNA biosynthesis; selenocysteinyl-tRNA(Sec) biosynthesis; selenocysteinyl-tRNA(Sec) from L-seryl-tRNA(Sec) (bacterial route): step 1/1. In terms of biological role, converts seryl-tRNA(Sec) to selenocysteinyl-tRNA(Sec) required for selenoprotein biosynthesis. The chain is L-seryl-tRNA(Sec) selenium transferase from Helicobacter pylori (strain J99 / ATCC 700824) (Campylobacter pylori J99).